A 126-amino-acid polypeptide reads, in one-letter code: Aspartate 1-decarboxylase (126 aa).

Ser-25 (schiff-base intermediate with substrate; via pyruvic acid) is an active-site residue. Pyruvic acid (Ser) is present on Ser-25. Thr-57 contributes to the substrate binding site. The active-site Proton donor is the Tyr-58. Gly-73–Ala-75 lines the substrate pocket.

It belongs to the PanD family. As to quaternary structure, heterooctamer of four alpha and four beta subunits. Pyruvate is required as a cofactor. Post-translationally, is synthesized initially as an inactive proenzyme, which is activated by self-cleavage at a specific serine bond to produce a beta-subunit with a hydroxyl group at its C-terminus and an alpha-subunit with a pyruvoyl group at its N-terminus.

It is found in the cytoplasm. The enzyme catalyses L-aspartate + H(+) = beta-alanine + CO2. The protein operates within cofactor biosynthesis; (R)-pantothenate biosynthesis; beta-alanine from L-aspartate: step 1/1. In terms of biological role, catalyzes the pyruvoyl-dependent decarboxylation of aspartate to produce beta-alanine. The protein is Aspartate 1-decarboxylase of Cronobacter sakazakii (strain ATCC BAA-894) (Enterobacter sakazakii).